A 256-amino-acid chain; its full sequence is MDKPYGYASVSMSGIDRSAGKDIDLEMGVGEATLYPGLSYGENQLRWGFIRKVYGILSAQLLLTTLISAVVVLNPPVNDLLTGSPGILLFLCIVPFILIWPLHIYHQKHPVNLILLALFTVSLSFTVGVSCAMTEGRIVLQALILTLSVVGSLTAYTFWAAKKGKDFSFLGPILFTSLIILVVTSFIQMFFPLGPTSVAVYGGFSALVFCGYIVYDTDNLIKRFTYDEYILASVALYLDILNLFLTILRILRQGDN.

7 helical membrane passes run 53-73, 85-105, 113-133, 138-158, 167-187, 189-209, and 228-248; these read VYGILSAQLLLTTLISAVVVL, PGILLFLCIVPFILIWPLHIY, LILLALFTVSLSFTVGVSCAM, IVLQALILTLSVVGSLTAYTF, FSFLGPILFTSLIILVVTSFI, MFFPLGPTSVAVYGGFSALVF, and EYILASVALYLDILNLFLTIL.

This sequence belongs to the BI1 family.

The protein localises to the membrane. The sequence is that of BI1-like protein from Arabidopsis thaliana (Mouse-ear cress).